The following is a 342-amino-acid chain: Transmembrane protein 268 (342 aa).

Residues Met1–Pro30 form a disordered region. Helical transmembrane passes span Ala105–Phe125 and Ala132–Phe152.

Interacts with ITGAM; this interaction inhibits ITGAM degradation via the endosome-lysosome pathway. Interacts with ITGB4; this interaction prevents ITGB4 degradation.

Its subcellular location is the cell membrane. Functionally, stabilizes cell surface expression of ITGAM and participates in the adhesion and migration of phagocytes during bacterial clearance. In Homo sapiens (Human), this protein is Transmembrane protein 268.